The sequence spans 208 residues: Uracil phosphoribosyltransferase (208 aa).

Residues Arg-78, Arg-103, and 130–138 contribute to the 5-phospho-alpha-D-ribose 1-diphosphate site; that span reads DPMLATGGS. Residues Ile-193 and 198 to 200 contribute to the uracil site; that span reads GDA. Residue Asp-199 coordinates 5-phospho-alpha-D-ribose 1-diphosphate.

Belongs to the UPRTase family. Mg(2+) is required as a cofactor.

It carries out the reaction UMP + diphosphate = 5-phospho-alpha-D-ribose 1-diphosphate + uracil. The protein operates within pyrimidine metabolism; UMP biosynthesis via salvage pathway; UMP from uracil: step 1/1. With respect to regulation, allosterically activated by GTP. Its function is as follows. Catalyzes the conversion of uracil and 5-phospho-alpha-D-ribose 1-diphosphate (PRPP) to UMP and diphosphate. This is Uracil phosphoribosyltransferase from Haemophilus influenzae (strain 86-028NP).